The following is a 185-amino-acid chain: Small ribosomal subunit protein uS5 (185 aa).

The S5 DRBM domain occupies 18–81 (FVDKLVHINR…ESAKRALIRV (64 aa)).

This sequence belongs to the universal ribosomal protein uS5 family. In terms of assembly, part of the 30S ribosomal subunit. Contacts proteins S4 and S8.

Functionally, with S4 and S12 plays an important role in translational accuracy. Located at the back of the 30S subunit body where it stabilizes the conformation of the head with respect to the body. This is Small ribosomal subunit protein uS5 from Azorhizobium caulinodans (strain ATCC 43989 / DSM 5975 / JCM 20966 / LMG 6465 / NBRC 14845 / NCIMB 13405 / ORS 571).